The sequence spans 303 residues: Hemolysin C (303 aa).

CBS domains follow at residues Met-81–Leu-143 and Leu-146–Glu-203.

The protein belongs to the UPF0053 family. Hemolysin C subfamily.

The polypeptide is Hemolysin C (tlyC) (Rickettsia prowazekii (strain Madrid E)).